The sequence spans 321 residues: Carbonic anhydrase, chloroplastic (321 aa).

The transit peptide at 1 to 100 (MSTASINSCL…AAARVDQITA (100 aa)) directs the protein to the chloroplast.

This sequence belongs to the beta-class carbonic anhydrase family. Homohexamer.

It localises to the plastid. Its subcellular location is the chloroplast stroma. It carries out the reaction hydrogencarbonate + H(+) = CO2 + H2O. Its function is as follows. Reversible hydration of carbon dioxide. The chain is Carbonic anhydrase, chloroplastic from Nicotiana tabacum (Common tobacco).